Consider the following 395-residue polypeptide: Ketoisovalerate oxidoreductase subunit VorA (395 aa).

In terms of assembly, heterotetramer of one alpha, one beta, one delta and one gamma chain.

The catalysed reaction is 3-methyl-2-oxobutanoate + 2 oxidized [2Fe-2S]-[ferredoxin] + CoA = 2-methylpropanoyl-CoA + 2 reduced [2Fe-2S]-[ferredoxin] + CO2 + H(+). This chain is Ketoisovalerate oxidoreductase subunit VorA (vorA), found in Pyrococcus abyssi (strain GE5 / Orsay).